Here is a 218-residue protein sequence, read N- to C-terminus: Thymidylate kinase (218 aa).

15-22 (GLDRSGKS) contacts ATP.

This sequence belongs to the thymidylate kinase family.

The catalysed reaction is dTMP + ATP = dTDP + ADP. It functions in the pathway pyrimidine metabolism; dTTP biosynthesis. In terms of biological role, catalyzes the conversion of dTMP to dTDP. The polypeptide is Thymidylate kinase (Caenorhabditis elegans).